Here is a 543-residue protein sequence, read N- to C-terminus: CTP synthase (543 aa).

The amidoligase domain stretch occupies residues 1–265; that stretch reads MTRYIFVTGG…DDFVVERFGL (265 aa). Residue Ser-13 participates in CTP binding. Ser-13 is a binding site for UTP. ATP contacts are provided by residues 14–19 and Asp-71; that span reads SLGKGI. The Mg(2+) site is built by Asp-71 and Glu-139. CTP-binding positions include 146–148, 186–191, and Lys-222; these read DIE and KTKPTQ. UTP-binding positions include 186–191 and Lys-222; that span reads KTKPTQ. Residues 290 to 541 form the Glutamine amidotransferase type-1 domain; it reads TIAMVGKYME…VNAALAQKAK (252 aa). L-glutamine is bound at residue Gly-351. The Nucleophile; for glutamine hydrolysis role is filled by Cys-378. L-glutamine is bound by residues 379 to 382, Glu-402, and Arg-469; that span reads LGMQ. Active-site residues include His-514 and Glu-516.

This sequence belongs to the CTP synthase family. In terms of assembly, homotetramer.

The enzyme catalyses UTP + L-glutamine + ATP + H2O = CTP + L-glutamate + ADP + phosphate + 2 H(+). The catalysed reaction is L-glutamine + H2O = L-glutamate + NH4(+). It catalyses the reaction UTP + NH4(+) + ATP = CTP + ADP + phosphate + 2 H(+). The protein operates within pyrimidine metabolism; CTP biosynthesis via de novo pathway; CTP from UDP: step 2/2. Allosterically activated by GTP, when glutamine is the substrate; GTP has no effect on the reaction when ammonia is the substrate. The allosteric effector GTP functions by stabilizing the protein conformation that binds the tetrahedral intermediate(s) formed during glutamine hydrolysis. Inhibited by the product CTP, via allosteric rather than competitive inhibition. Functionally, catalyzes the ATP-dependent amination of UTP to CTP with either L-glutamine or ammonia as the source of nitrogen. Regulates intracellular CTP levels through interactions with the four ribonucleotide triphosphates. In Ectopseudomonas mendocina (strain ymp) (Pseudomonas mendocina), this protein is CTP synthase.